The primary structure comprises 995 residues: Integrator complex subunit 8 (995 aa).

Residue threonine 18 is modified to Phosphothreonine. The WFEF motif signature appears at tryptophan 24–leucine 29. TPR repeat units lie at residues cysteine 250 to isoleucine 288, serine 320 to valine 356, valine 570 to phenylalanine 603, and histidine 833 to phenylalanine 866.

Belongs to the Integrator subunit 8 family. In terms of assembly, component of the Integrator complex, composed of core subunits INTS1, INTS2, INTS3, INTS4, INTS5, INTS6, INTS7, INTS8, INTS9/RC74, INTS10, INTS11/CPSF3L, INTS12, INTS13, INTS14 and INTS15. The core complex associates with protein phosphatase 2A subunits PPP2CA and PPP2R1A, to form the Integrator-PP2A (INTAC) complex.

The protein localises to the nucleus. It localises to the chromosome. Its function is as follows. Component of the integrator complex, a multiprotein complex that terminates RNA polymerase II (Pol II) transcription in the promoter-proximal region of genes. The integrator complex provides a quality checkpoint during transcription elongation by driving premature transcription termination of transcripts that are unfavorably configured for transcriptional elongation: the complex terminates transcription by (1) catalyzing dephosphorylation of the C-terminal domain (CTD) of Pol II subunit POLR2A/RPB1 and SUPT5H/SPT5, (2) degrading the exiting nascent RNA transcript via endonuclease activity and (3) promoting the release of Pol II from bound DNA. The integrator complex is also involved in terminating the synthesis of non-coding Pol II transcripts, such as enhancer RNAs (eRNAs), small nuclear RNAs (snRNAs), telomerase RNAs and long non-coding RNAs (lncRNAs). Within the integrator complex, INTS8 is required for the recruitment of protein phosphatase 2A (PP2A) to transcription pause-release checkpoint. In Homo sapiens (Human), this protein is Integrator complex subunit 8.